We begin with the raw amino-acid sequence, 366 residues long: UDP-N-acetylglucosamine--N-acetylmuramyl-(pentapeptide) pyrophosphoryl-undecaprenol N-acetylglucosamine transferase (366 aa).

UDP-N-acetyl-alpha-D-glucosamine contacts are provided by residues 14–16, N125, R168, S196, and Q297; that span reads TGG.

The protein belongs to the glycosyltransferase 28 family. MurG subfamily.

Its subcellular location is the cell inner membrane. The catalysed reaction is di-trans,octa-cis-undecaprenyl diphospho-N-acetyl-alpha-D-muramoyl-L-alanyl-D-glutamyl-meso-2,6-diaminopimeloyl-D-alanyl-D-alanine + UDP-N-acetyl-alpha-D-glucosamine = di-trans,octa-cis-undecaprenyl diphospho-[N-acetyl-alpha-D-glucosaminyl-(1-&gt;4)]-N-acetyl-alpha-D-muramoyl-L-alanyl-D-glutamyl-meso-2,6-diaminopimeloyl-D-alanyl-D-alanine + UDP + H(+). It participates in cell wall biogenesis; peptidoglycan biosynthesis. In terms of biological role, cell wall formation. Catalyzes the transfer of a GlcNAc subunit on undecaprenyl-pyrophosphoryl-MurNAc-pentapeptide (lipid intermediate I) to form undecaprenyl-pyrophosphoryl-MurNAc-(pentapeptide)GlcNAc (lipid intermediate II). The sequence is that of UDP-N-acetylglucosamine--N-acetylmuramyl-(pentapeptide) pyrophosphoryl-undecaprenol N-acetylglucosamine transferase from Rhodopseudomonas palustris (strain ATCC BAA-98 / CGA009).